Here is a 535-residue protein sequence, read N- to C-terminus: CTP synthase (535 aa).

Residues 1 to 267 form an amidoligase domain region; that stretch reads MTKYIFVTGG…DQIVCDHLKL (267 aa). Ser13 serves as a coordination point for CTP. Ser13 lines the UTP pocket. 14–19 contributes to the ATP binding site; sequence SLGKGI. L-glutamine is bound at residue Tyr54. Asp71 lines the ATP pocket. Mg(2+)-binding residues include Asp71 and Glu141. CTP is bound by residues 148–150, 188–193, and Lys224; these read DIE and KTKPTQ. UTP contacts are provided by residues 188–193 and Lys224; that span reads KTKPTQ. 240 to 242 serves as a coordination point for ATP; that stretch reads RDA. One can recognise a Glutamine amidotransferase type-1 domain in the interval 292 to 534; that stretch reads KIALVGKYVE…VRASITNKES (243 aa). Gly354 serves as a coordination point for L-glutamine. Cys381 serves as the catalytic Nucleophile; for glutamine hydrolysis. L-glutamine contacts are provided by residues 382 to 385, Glu405, and Arg462; that span reads LGMQ. Residues His507 and Glu509 contribute to the active site.

It belongs to the CTP synthase family. In terms of assembly, homotetramer.

It catalyses the reaction UTP + L-glutamine + ATP + H2O = CTP + L-glutamate + ADP + phosphate + 2 H(+). The enzyme catalyses L-glutamine + H2O = L-glutamate + NH4(+). The catalysed reaction is UTP + NH4(+) + ATP = CTP + ADP + phosphate + 2 H(+). The protein operates within pyrimidine metabolism; CTP biosynthesis via de novo pathway; CTP from UDP: step 2/2. Allosterically activated by GTP, when glutamine is the substrate; GTP has no effect on the reaction when ammonia is the substrate. The allosteric effector GTP functions by stabilizing the protein conformation that binds the tetrahedral intermediate(s) formed during glutamine hydrolysis. Inhibited by the product CTP, via allosteric rather than competitive inhibition. Functionally, catalyzes the ATP-dependent amination of UTP to CTP with either L-glutamine or ammonia as the source of nitrogen. Regulates intracellular CTP levels through interactions with the four ribonucleotide triphosphates. This chain is CTP synthase, found in Bacillus cereus (strain ATCC 14579 / DSM 31 / CCUG 7414 / JCM 2152 / NBRC 15305 / NCIMB 9373 / NCTC 2599 / NRRL B-3711).